The following is a 565-amino-acid chain: Zinc finger protein 512 (565 aa).

A disordered region spans residues 1–30 (MSSRLGAVPATSGPTTFKQQRSTRIVGAKN). The segment covering 12-23 (SGPTTFKQQRST) has biased composition (polar residues). Residues lysine 18 and lysine 83 each participate in a glycyl lysine isopeptide (Lys-Gly) (interchain with G-Cter in SUMO2) cross-link. The disordered stretch occupies residues 85-147 (AATSHVEGSG…QARRIRKEPP (63 aa)). Basic residues predominate over residues 118-129 (KKHKLYGRKQRP). The C2H2-type 1 zinc finger occupies 196–219 (FTCHHCGKQLRSLAGMKYHVMANH). Residue lysine 226 forms a Glycyl lysine isopeptide (Lys-Gly) (interchain with G-Cter in SUMO2) linkage. The C2H2-type 2 zinc-finger motif lies at 286–309 (LKCHHCGKPYRSKAGLAYHLRSEH). A Glycyl lysine isopeptide (Lys-Gly) (interchain with G-Cter in SUMO2) cross-link involves residue lysine 332. A C2H2-type 3; atypical zinc finger spans residues 405–429 (IQCPNQGCEAVYSSVSGLKAHLGSC). The segment at 439–462 (YKCLLCQKEFVSESGVKYHINSVH) adopts a C2H2-type 4 zinc-finger fold. The segment covering 484–493 (KQRQQEEEKR) has biased composition (basic and acidic residues). The tract at residues 484–565 (KQRQQEEEKR…PKTNHKRGRK (82 aa)) is disordered. Over residues 494-507 (RQQHRSRRSLRRRQ) the composition is skewed to basic residues. The segment covering 522–531 (VGKDQRRNEE) has biased composition (basic and acidic residues). Over residues 554–565 (KPPKTNHKRGRK) the composition is skewed to basic residues.

This sequence belongs to the krueppel C2H2-type zinc-finger protein family.

The protein localises to the nucleus. Its function is as follows. May be involved in transcriptional regulation. This Macaca fascicularis (Crab-eating macaque) protein is Zinc finger protein 512 (ZNF512).